The sequence spans 446 residues: Tubulin beta-1 chain (446 aa).

8 residues coordinate GTP: glutamine 13, glutamate 71, serine 140, glycine 144, threonine 145, glycine 146, asparagine 206, and asparagine 228. Glutamate 71 contacts Mg(2+). The disordered stretch occupies residues 421-446; that stretch reads VSEYQQYQDASADDGEEYEEDAPMEE. Acidic residues predominate over residues 431 to 446; sequence SADDGEEYEEDAPMEE.

This sequence belongs to the tubulin family. As to quaternary structure, dimer of alpha and beta chains. A typical microtubule is a hollow water-filled tube with an outer diameter of 25 nm and an inner diameter of 15 nM. Alpha-beta heterodimers associate head-to-tail to form protofilaments running lengthwise along the microtubule wall with the beta-tubulin subunit facing the microtubule plus end conferring a structural polarity. Microtubules usually have 13 protofilaments but different protofilament numbers can be found in some organisms and specialized cells. Mg(2+) is required as a cofactor.

The protein localises to the cytoplasm. Its subcellular location is the cytoskeleton. Its function is as follows. Tubulin is the major constituent of microtubules, a cylinder consisting of laterally associated linear protofilaments composed of alpha- and beta-tubulin heterodimers. Microtubules grow by the addition of GTP-tubulin dimers to the microtubule end, where a stabilizing cap forms. Below the cap, tubulin dimers are in GDP-bound state, owing to GTPase activity of alpha-tubulin. The sequence is that of Tubulin beta-1 chain (tub1) from Hypocrea rufa (Trichoderma viride).